A 554-amino-acid chain; its full sequence is Potassium-transporting ATPase potassium-binding subunit (554 aa).

10 helical membrane-spanning segments follow: residues 1–21, 60–80, 131–151, 174–194, 246–266, 279–299, 375–395, 412–432, 481–501, and 525–545; these read MSPV…LALA, PAYL…LYVL, GLAV…VALV, VRVL…CGAI, PGPF…FALT, GYAI…LMMW, GLYG…LMVG, FAAC…AAAM, IGIV…ALAG, and GLLV…ALAL.

It belongs to the KdpA family. The system is composed of three essential subunits: KdpA, KdpB and KdpC.

The protein resides in the cell membrane. Part of the high-affinity ATP-driven potassium transport (or Kdp) system, which catalyzes the hydrolysis of ATP coupled with the electrogenic transport of potassium into the cytoplasm. This subunit binds the extracellular potassium ions and delivers the ions to the membrane domain of KdpB through an intramembrane tunnel. This is Potassium-transporting ATPase potassium-binding subunit from Streptomyces avermitilis (strain ATCC 31267 / DSM 46492 / JCM 5070 / NBRC 14893 / NCIMB 12804 / NRRL 8165 / MA-4680).